Here is a 763-residue protein sequence, read N- to C-terminus: Polyribonucleotide nucleotidyltransferase (763 aa).

Residues Asp526 and Asp532 each coordinate Mg(2+). The KH domain maps to 592 to 651 (PRITTIKVPVDKIGEVIGPKGKMINSITEETGAQISIEDDGTVFVGAADGLSAQAAIDKI). An S1 motif domain is found at 663-732 (GERFLGTVVK…NRGKISLVLV (70 aa)). The disordered stretch occupies residues 739-763 (SAESAGDKGAEKAEGAAADVTPAEA). Over residues 743–752 (AGDKGAEKAE) the composition is skewed to basic and acidic residues.

It belongs to the polyribonucleotide nucleotidyltransferase family. Mg(2+) serves as cofactor.

The protein localises to the cytoplasm. The enzyme catalyses RNA(n+1) + phosphate = RNA(n) + a ribonucleoside 5'-diphosphate. In terms of biological role, involved in mRNA degradation. Catalyzes the phosphorolysis of single-stranded polyribonucleotides processively in the 3'- to 5'-direction. The chain is Polyribonucleotide nucleotidyltransferase from Mycolicibacterium smegmatis (strain ATCC 700084 / mc(2)155) (Mycobacterium smegmatis).